A 393-amino-acid chain; its full sequence is Protein TsgA (393 aa).

Transmembrane regions (helical) follow at residues 11–31 (WISF…GMVM), 51–71 (FLNA…EIVP), 78–98 (FGFI…SLAL), 101–121 (AAMF…TFLI), 134–154 (LLFT…VAAF), 162–182 (WYWV…LTFG), 206–226 (IGVL…LGFI), 245–265 (ALVS…SFIL), 273–293 (ILTV…TGTQ), 298–318 (WFIL…ITLG), 332–352 (FILT…GPIV), and 361–381 (LLTA…LGFV).

Belongs to the major facilitator superfamily. TsgA family.

It localises to the cell inner membrane. The polypeptide is Protein TsgA (Salmonella gallinarum (strain 287/91 / NCTC 13346)).